A 697-amino-acid chain; its full sequence is Methionine--tRNA ligase (697 aa).

The 'HIGH' region signature appears at 11 to 21 (PYANGPIHLGH). Cys-142, Cys-145, Cys-155, and Cys-158 together coordinate Zn(2+). A 'KMSKS' region motif is present at residues 343 to 347 (KMSKS). ATP is bound at residue Lys-346. One can recognise a tRNA-binding domain in the interval 595–697 (DFMKVEMTVA…DECKVGDKLA (103 aa)).

This sequence belongs to the class-I aminoacyl-tRNA synthetase family. MetG type 1 subfamily. In terms of assembly, homodimer. It depends on Zn(2+) as a cofactor.

The protein resides in the cytoplasm. The enzyme catalyses tRNA(Met) + L-methionine + ATP = L-methionyl-tRNA(Met) + AMP + diphosphate. Functionally, is required not only for elongation of protein synthesis but also for the initiation of all mRNA translation through initiator tRNA(fMet) aminoacylation. The protein is Methionine--tRNA ligase of Psychrobacter sp. (strain PRwf-1).